A 360-amino-acid polypeptide reads, in one-letter code: Peptide chain release factor 1 (360 aa).

Gln235 is subject to N5-methylglutamine. Residues 284–295 show a composition bias toward basic and acidic residues; sequence ERQEQAQADTRR. The disordered stretch occupies residues 284–309; that stretch reads ERQEQAQADTRRNLLGSGDRSDKIRT.

Belongs to the prokaryotic/mitochondrial release factor family. Methylated by PrmC. Methylation increases the termination efficiency of RF1.

The protein resides in the cytoplasm. In terms of biological role, peptide chain release factor 1 directs the termination of translation in response to the peptide chain termination codons UAG and UAA. The sequence is that of Peptide chain release factor 1 (prfA) from Pasteurella multocida (strain Pm70).